We begin with the raw amino-acid sequence, 270 residues long: tRNA pseudouridine synthase A (270 aa).

Catalysis depends on D51, which acts as the Nucleophile. Y109 serves as a coordination point for substrate.

This sequence belongs to the tRNA pseudouridine synthase TruA family. As to quaternary structure, homodimer.

It catalyses the reaction uridine(38/39/40) in tRNA = pseudouridine(38/39/40) in tRNA. Its function is as follows. Formation of pseudouridine at positions 38, 39 and 40 in the anticodon stem and loop of transfer RNAs. The polypeptide is tRNA pseudouridine synthase A (Burkholderia orbicola (strain MC0-3)).